Here is a 230-residue protein sequence, read N- to C-terminus: 3,4-dihydroxy-2-butanone 4-phosphate synthase (230 aa).

D-ribulose 5-phosphate contacts are provided by residues Arg42–Glu43, Asp47, Arg155–Thr159, and Glu179. A Mg(2+)-binding site is contributed by Glu43. His158 contributes to the Mg(2+) binding site.

Belongs to the DHBP synthase family. In terms of assembly, homodimer. Requires Mg(2+) as cofactor. The cofactor is Mn(2+).

It carries out the reaction D-ribulose 5-phosphate = (2S)-2-hydroxy-3-oxobutyl phosphate + formate + H(+). Its pathway is cofactor biosynthesis; riboflavin biosynthesis; 2-hydroxy-3-oxobutyl phosphate from D-ribulose 5-phosphate: step 1/1. Catalyzes the conversion of D-ribulose 5-phosphate to formate and 3,4-dihydroxy-2-butanone 4-phosphate. The protein is 3,4-dihydroxy-2-butanone 4-phosphate synthase of Bordetella pertussis (strain Tohama I / ATCC BAA-589 / NCTC 13251).